A 516-amino-acid polypeptide reads, in one-letter code: Gastrula zinc finger protein XlCGF53.1 (516 aa).

Disordered regions lie at residues 1–33 (MGMW…GKKE) and 200–220 (GNQS…TDKP). The segment covering 200-218 (GNQSDCSINPLTEQIQGTD) has biased composition (polar residues). 7 consecutive C2H2-type zinc fingers follow at residues 312–334 (YICS…QKTH), 354–376 (FPCS…QSSH), 382–404 (YACS…LKLH), 410–432 (FPCS…RRVH), 438–460 (YSCS…QRTH), 466–488 (FSCT…HRTH), and 494–516 (FSCT…HRTH).

The protein belongs to the krueppel C2H2-type zinc-finger protein family.

Its subcellular location is the nucleus. In terms of biological role, may be involved in transcriptional regulation. In Xenopus laevis (African clawed frog), this protein is Gastrula zinc finger protein XlCGF53.1.